The chain runs to 721 residues: Catalase-peroxidase (721 aa).

Positions W89 to Y212 form a cross-link, tryptophyl-tyrosyl-methioninium (Trp-Tyr) (with M-238). Catalysis depends on H90, which acts as the Proton acceptor. Residues Y212–M238 constitute a cross-link (tryptophyl-tyrosyl-methioninium (Tyr-Met) (with W-89)). H253 provides a ligand contact to heme b.

The protein belongs to the peroxidase family. Peroxidase/catalase subfamily. In terms of assembly, homodimer or homotetramer. Heme b is required as a cofactor. Formation of the three residue Trp-Tyr-Met cross-link is important for the catalase, but not the peroxidase activity of the enzyme.

The catalysed reaction is H2O2 + AH2 = A + 2 H2O. It carries out the reaction 2 H2O2 = O2 + 2 H2O. Bifunctional enzyme with both catalase and broad-spectrum peroxidase activity. The protein is Catalase-peroxidase of Shewanella baltica (strain OS195).